The following is a 280-amino-acid chain: Energy-coupling factor transporter ATP-binding protein EcfA1 (280 aa).

The ABC transporter domain occupies 6-241 (LRIENISFQY…SHMLQEIGLD (236 aa)). 40–47 (GQNGSGKS) serves as a coordination point for ATP.

This sequence belongs to the ABC transporter superfamily. Energy-coupling factor EcfA family. In terms of assembly, forms a stable energy-coupling factor (ECF) transporter complex composed of 2 membrane-embedded substrate-binding proteins (S component), 2 ATP-binding proteins (A component) and 2 transmembrane proteins (T component).

The protein localises to the cell membrane. Functionally, ATP-binding (A) component of a common energy-coupling factor (ECF) ABC-transporter complex. Unlike classic ABC transporters this ECF transporter provides the energy necessary to transport a number of different substrates. The protein is Energy-coupling factor transporter ATP-binding protein EcfA1 of Bacillus cereus (strain ATCC 14579 / DSM 31 / CCUG 7414 / JCM 2152 / NBRC 15305 / NCIMB 9373 / NCTC 2599 / NRRL B-3711).